The following is a 305-amino-acid chain: Succinate--CoA ligase [ADP-forming] subunit alpha (305 aa).

Residues 17 to 20 (TGKE), Lys43, and 96 to 98 (ITE) each bind CoA. Tyr161 lines the substrate pocket. The Tele-phosphohistidine intermediate role is filled by His249.

Belongs to the succinate/malate CoA ligase alpha subunit family. As to quaternary structure, heterotetramer of two alpha and two beta subunits.

The enzyme catalyses succinate + ATP + CoA = succinyl-CoA + ADP + phosphate. It catalyses the reaction GTP + succinate + CoA = succinyl-CoA + GDP + phosphate. Its pathway is carbohydrate metabolism; tricarboxylic acid cycle; succinate from succinyl-CoA (ligase route): step 1/1. Functionally, succinyl-CoA synthetase functions in the citric acid cycle (TCA), coupling the hydrolysis of succinyl-CoA to the synthesis of either ATP or GTP and thus represents the only step of substrate-level phosphorylation in the TCA. The alpha subunit of the enzyme binds the substrates coenzyme A and phosphate, while succinate binding and nucleotide specificity is provided by the beta subunit. This chain is Succinate--CoA ligase [ADP-forming] subunit alpha, found in Aquifex aeolicus (strain VF5).